The primary structure comprises 423 residues: Methionine aminopeptidase 2 (423 aa).

Residues 1–17 (MTDVIDAKPEEAKKVPP) are compositionally biased toward basic and acidic residues. The tract at residues 1-89 (MTDVIDAKPE…IQPYKDDNAY (89 aa)) is disordered. Over residues 18–29 (EVEDEDSGDESA) the composition is skewed to acidic residues. Residues 41 to 54 (KKKKKKKKPKKKKK) are compositionally biased toward basic residues. His176 lines the substrate pocket. Residues Asp196, Asp207, and His276 each contribute to the a divalent metal cation site. Substrate is bound at residue His284. Glu309 and Glu404 together coordinate a divalent metal cation.

It belongs to the peptidase M24A family. Methionine aminopeptidase eukaryotic type 2 subfamily. It depends on Co(2+) as a cofactor. Requires Zn(2+) as cofactor. The cofactor is Mn(2+). Fe(2+) serves as cofactor.

The protein localises to the cytoplasm. The enzyme catalyses Release of N-terminal amino acids, preferentially methionine, from peptides and arylamides.. Cotranslationally removes the N-terminal methionine from nascent proteins. The N-terminal methionine is often cleaved when the second residue in the primary sequence is small and uncharged (Met-Ala-, Cys, Gly, Pro, Ser, Thr, or Val). In Schizophyllum commune (strain H4-8 / FGSC 9210) (Split gill fungus), this protein is Methionine aminopeptidase 2.